A 209-amino-acid chain; its full sequence is Chalcone isomerase-like protein 2 (209 aa).

Belongs to the chalcone isomerase family. In terms of assembly, component an active demethylxanthohumol (DMX) biosynthetic metabolon in glandular trichomes (lupulin glands) that encompasses a chalcone synthase (CHS) and a membrane-bound prenyltransferase. Interacts with CHS_H1 and PT1L. Mostly expressed in glandular trichomes (lupulin glands), and, to a lower extent, in cones, cones bracts, leaves, stems and roots.

Its subcellular location is the cytoplasm. It catalyses the reaction a chalcone = a flavanone.. The protein operates within secondary metabolite biosynthesis; flavonoid biosynthesis. Its function is as follows. Involved in the biosynthesis of prenylated phenolics natural products which contribute to the bitter taste of beer and display broad biological activities. Involved in anthocyanin biosynthesis. Polyketide binding proteins (PBP) which promotes the catalytic activities of CHS_H1 and PT1L and triggers demethylxanthohumol (DMX) production. The polypeptide is Chalcone isomerase-like protein 2 (Humulus lupulus (European hop)).